The sequence spans 268 residues: Undecaprenyl-diphosphatase (268 aa).

The next 7 membrane-spanning stretches (helical) occupy residues 47 to 67, 85 to 105, 109 to 129, 144 to 164, 184 to 204, 217 to 237, and 246 to 266; these read FAVLIQLGAILAILALYFSKL, IGVLVAFLPAAVIGAASGGLI, LFNPWVVCFTLILGGGILLWV, FPLPMYLIIGFAQCIAMFPGV, AAEFSFFLAIPTMLGAFVYDL, LIVAVGFAVSFITAIIVVKTF, and FALFAWWRVIVGTLGLIALAL.

This sequence belongs to the UppP family.

It is found in the cell inner membrane. It carries out the reaction di-trans,octa-cis-undecaprenyl diphosphate + H2O = di-trans,octa-cis-undecaprenyl phosphate + phosphate + H(+). Its function is as follows. Catalyzes the dephosphorylation of undecaprenyl diphosphate (UPP). Confers resistance to bacitracin. In Rhodopseudomonas palustris (strain BisA53), this protein is Undecaprenyl-diphosphatase.